Reading from the N-terminus, the 303-residue chain is tRNA pseudouridine synthase-like 1 (303 aa).

The active-site Nucleophile is Asp66. A Phosphoserine modification is found at Ser84. Tyr130 contributes to the substrate binding site.

This sequence belongs to the tRNA pseudouridine synthase TruA family.

It carries out the reaction a uridine in tRNA = a pseudouridine in tRNA. The polypeptide is tRNA pseudouridine synthase-like 1 (PUSL1) (Homo sapiens (Human)).